The primary structure comprises 319 residues: 1-aminocyclopropane-1-carboxylate oxidase (319 aa).

Positions 153-253 (PTFGTKVSNY…RMSIASFYNP (101 aa)) constitute a Fe2OG dioxygenase domain. The Fe cation site is built by H177, D179, and H234.

The protein belongs to the iron/ascorbate-dependent oxidoreductase family. The cofactor is Fe cation.

The enzyme catalyses 1-aminocyclopropane-1-carboxylate + L-ascorbate + O2 = ethene + L-dehydroascorbate + hydrogen cyanide + CO2 + 2 H2O. Its pathway is alkene biosynthesis; ethylene biosynthesis via S-adenosyl-L-methionine; ethylene from S-adenosyl-L-methionine: step 2/2. The sequence is that of 1-aminocyclopropane-1-carboxylate oxidase (ACO) from Actinidia deliciosa (Kiwi).